Here is a 511-residue protein sequence, read N- to C-terminus: Maturase K (511 aa).

It belongs to the intron maturase 2 family. MatK subfamily.

It localises to the plastid. Its subcellular location is the chloroplast. Its function is as follows. Usually encoded in the trnK tRNA gene intron. Probably assists in splicing its own and other chloroplast group II introns. The sequence is that of Maturase K from Chloranthus spicatus (Chulantree).